A 382-amino-acid polypeptide reads, in one-letter code: uncharacterized protein (382 aa).

The next 12 membrane-spanning stretches (helical) occupy residues 14–34 (GLLLLTLAIAVLNTLVPLWLA), 45–65 (VVSSSYFTGNLVGTLLTGYVI), 79–99 (FIFAAGCAGLGLMIGFWSWLA), 102–122 (FVAGVGCAMIWVVVESALMCS), 131–151 (LLAAYMMVYYVGTFLGQLLVS), 157–177 (LMSVLPWVTGLTLAGILPLLF), 204–224 (LGVNGCIISGIVLGSLYGLMP), 235–255 (ASIGFWMAVLVSAGILGQWPI), 270–290 (VQVFVVILGSIAMLSQAAMAP), 291–311 (ALFILGAAGFTLYPVAMAWAC), 325–345 (ALLLSYTVGSLLGPSFTAMLM), and 348–368 (FSDNLLFIMIASVSFIYLLML).

Belongs to the major facilitator superfamily. YcaD (TC 2.A.1.26) family.

The protein resides in the cell inner membrane. This is an uncharacterized protein from Shigella sonnei (strain Ss046).